We begin with the raw amino-acid sequence, 326 residues long: F-box/LRR-repeat protein 12 (326 aa).

Positions M1–V47 constitute an F-box domain. 8 LRR repeats span residues L51–G78, A86–V111, D113–S133, V161–G185, T186–G211, C212–T236, V237–G261, and P266–G291.

In terms of assembly, interacts with SKP1 and CUL1.

The protein operates within protein modification; protein ubiquitination. Its function is as follows. Substrate-recognition component of the SCF (SKP1-CUL1-F-box protein)-type E3 ubiquitin ligase complex. Mediates the polyubiquitination and proteasomal degradation of CAMK1 leading to disruption of cyclin D1/CDK4 complex assembly which results in G1 cell cycle arrest in lung epithelia. The polypeptide is F-box/LRR-repeat protein 12 (FBXL12) (Homo sapiens (Human)).